A 204-amino-acid polypeptide reads, in one-letter code: Peptidyl-tRNA hydrolase 2 (204 aa).

Y37 provides a ligand contact to tRNA. H42 acts as the Proton acceptor in catalysis. Residues F86, N88, and N134 each coordinate tRNA.

This sequence belongs to the PTH family. In terms of assembly, monomer.

The protein resides in the cytoplasm. It catalyses the reaction an N-acyl-L-alpha-aminoacyl-tRNA + H2O = an N-acyl-L-amino acid + a tRNA + H(+). Its function is as follows. Hydrolyzes ribosome-free peptidyl-tRNAs (with 1 or more amino acids incorporated), which drop off the ribosome during protein synthesis, or as a result of ribosome stalling. Functionally, catalyzes the release of premature peptidyl moieties from peptidyl-tRNA molecules trapped in stalled 50S ribosomal subunits, and thus maintains levels of free tRNAs and 50S ribosomes. This chain is Peptidyl-tRNA hydrolase 2, found in Corynebacterium glutamicum (strain ATCC 13032 / DSM 20300 / JCM 1318 / BCRC 11384 / CCUG 27702 / LMG 3730 / NBRC 12168 / NCIMB 10025 / NRRL B-2784 / 534).